Reading from the N-terminus, the 237-residue chain is uncharacterized protein (237 aa).

The segment at 213–237 (GQGKYLKLDSNTTENKTTKQNETGG) is disordered. The segment covering 223–237 (NTTENKTTKQNETGG) has biased composition (low complexity).

This is an uncharacterized protein from Methanothermobacter thermautotrophicus (Methanobacterium thermoformicicum).